A 135-amino-acid polypeptide reads, in one-letter code: ATP synthase epsilon chain (135 aa).

Residues 89–100 (SGKAEAELEKAK) are compositionally biased toward basic and acidic residues. The disordered stretch occupies residues 89–114 (SGKAEAELEKAKNQLSQNKDQGNSPE). Residues 101 to 112 (NQLSQNKDQGNS) show a composition bias toward polar residues.

This sequence belongs to the ATPase epsilon chain family. F-type ATPases have 2 components, CF(1) - the catalytic core - and CF(0) - the membrane proton channel. CF(1) has five subunits: alpha(3), beta(3), gamma(1), delta(1), epsilon(1). CF(0) has three main subunits: a, b and c.

It is found in the cellular thylakoid membrane. Functionally, produces ATP from ADP in the presence of a proton gradient across the membrane. This Prochlorococcus marinus (strain NATL2A) protein is ATP synthase epsilon chain.